We begin with the raw amino-acid sequence, 617 residues long: MGPIDTSQRLARLRELMQERKVDVYIVPSEDSHQSEYIAHCDGRREFISGFTGSAGCAIVSMTKAALSTDGRYFNQAAKQLDSNWILLKRGFENMPTWQEWTAEQAEGGKVVGVDPSLITAFDARNLSETIKKCGGSLLGVQENLVDLVWGTERPARPSEKVALHPIEFAGKSFEEKISDLRKELQKKKCAGFVISMLDEIAWLFNLRGNDIPYNPVFFAYAIITQSTADLYIDEEKLPAEVKNYLGDKVSLKPYGSIFEDAKVLGQSAQNKSDGEASTKPPQKFLISTRASWSLSLALGGEKNVEEVRSPITDAKAIKNEAELEGMRACHIRDGAALSEYFAWLENELVNKKTVLNEVDASDKLEQIRSKHQHFVGLSFDTISSTGPNAAVIHYKAERNNCSIIDPKAVYLCDSGAQYLDGTTDTTRTLHFGEPTEMEKKAYTLVLKGLISIDTAVFPKGTTGFALDAFARQYLWKEGLDYLHGTGHGVGSYLNVHEGPIGLGTRVQYSEVAIAPGNVISDEPGYYEDGVFGIRIENIIMAKEVKTTHKFGEKPWLGFEHVTMTPLCQKLINPSLLSDAEKKWVNDYHTEIWEKTSKYFENDELTRNWLKRETQPI.

Mn(2+) is bound by residues D414, D425, E523, and E537.

This sequence belongs to the peptidase M24B family. The cofactor is Mn(2+).

The catalysed reaction is Release of any N-terminal amino acid, including proline, that is linked to proline, even from a dipeptide or tripeptide.. Its function is as follows. Catalyzes the removal of a penultimate prolyl residue from the N-termini of peptides. This Ajellomyces capsulatus (strain NAm1 / WU24) (Darling's disease fungus) protein is Probable Xaa-Pro aminopeptidase P (AMPP).